Reading from the N-terminus, the 141-residue chain is Hemoglobin subunit alpha-D (141 aa).

Residues 1-141 (MLNHDEKQLI…VSAVLAEKYR (141 aa)) enclose the Globin domain. Residues His-58 and His-87 each contribute to the heme b site.

The protein belongs to the globin family. Heterotetramer of two alpha-D chains and two beta chains. In terms of tissue distribution, red blood cells.

Functionally, involved in oxygen transport from the lung to the various peripheral tissues. The protein is Hemoglobin subunit alpha-D (HBAD) of Chrysemys picta bellii (Western painted turtle).